The sequence spans 356 residues: Alpha-N-acetylneuraminide alpha-2,8-sialyltransferase (356 aa).

The Cytoplasmic segment spans residues 1 to 29 (MSPCGRARRQTSRGAMAVLAWKFPRTRLP). The chain crosses the membrane as a helical; Signal-anchor for type II membrane protein span at residues 30–48 (MGASALCVVVLCWLYIFPV). At 49-356 (YRLPNEKEIV…CEDTSLQPTS (308 aa)) the chain is on the lumenal side. N-linked (GlcNAc...) asparagine glycans are attached at residues asparagine 71 and asparagine 119. 2 disulfides stabilise this stretch: cysteine 138/cysteine 287 and cysteine 152/cysteine 347. 2 residues coordinate CMP-N-acetyl-beta-neuraminate: asparagine 143 and asparagine 166. N-linked (GlcNAc...) asparagine glycans are attached at residues asparagine 214 and asparagine 245. Residues serine 274, threonine 275, glycine 276, tryptophan 296, and histidine 310 each coordinate CMP-N-acetyl-beta-neuraminate. Histidine 322 serves as the catalytic Proton donor/acceptor.

It belongs to the glycosyltransferase 29 family.

It is found in the golgi apparatus membrane. It carries out the reaction an N-acetyl-alpha-neuraminyl-(2-&gt;3)-beta-D-galactosyl derivative + CMP-N-acetyl-beta-neuraminate = an N-acetyl-alpha-neuraminyl-(2-&gt;8)-N-acetyl-alpha-neuraminyl-(2-&gt;3)-beta-D-galactosyl derivative + CMP + H(+). The enzyme catalyses a ganglioside GM3 (d18:1(4E)) + CMP-N-acetyl-beta-neuraminate = a ganglioside GD3 (d18:1(4E)) + CMP + H(+). It catalyses the reaction a ganglioside GD3 (d18:1(4E)) + CMP-N-acetyl-beta-neuraminate = a ganglioside GT3 (d18:1(4E)) + CMP + H(+). The catalysed reaction is a ganglioside GD1a (d18:1(4E)) + CMP-N-acetyl-beta-neuraminate = a ganglioside GT1a (d18:1(4E)) + CMP + H(+). It carries out the reaction a ganglioside GT1b (d18:1(4E)) + CMP-N-acetyl-beta-neuraminate = a ganglioside GQ1b (d18:1(4E)) + CMP + H(+). The enzyme catalyses a ganglioside GM1b (d18:1(4E)) + CMP-N-acetyl-beta-neuraminate = a ganglioside GD1c (d18:1(4E)) + CMP + H(+). It catalyses the reaction a ganglioside GD3 + CMP-N-acetyl-beta-neuraminate = a ganglioside GT3 + CMP + H(+). The catalysed reaction is [alpha-N-acetylneuraminyl-(2-&gt;8)](n)-alpha-N-acetylneuraminyl-(2-&gt;8)-alpha-N-acetylneuraminyl-(2-&gt;3)-beta-D-galactosyl-(1-&gt;4)-beta-D-glucosyl-(1&lt;-&gt;1)-ceramide + CMP-N-acetyl-beta-neuraminate = [alpha-N-acetylneuraminyl-(2-&gt;8)](n+1)-alpha-N-acetylneuraminyl-(2-&gt;8)-alpha-N-acetylneuraminyl-(2-&gt;3)-beta-D-galactosyl-(1-&gt;4)-beta-D-glucosyl-(1&lt;-&gt;1)-ceramide + CMP + H(+). It participates in protein modification; protein glycosylation. It functions in the pathway lipid metabolism; sphingolipid metabolism. In terms of biological role, catalyzes the addition of sialic acid in alpha 2,8-linkage to the sialic acid moiety of the ganglioside GM3 to form ganglioside GD3; gangliosides are a subfamily of complex glycosphingolipds that contain one or more residues of sialic acid. Can catalyze the addition of a second alpha-2,8- sialic acid to GD3 to form GT3. Can use GM1b, GD1a and GT1b as acceptor substrates to synthesize GD1c, GT1a and GQ1b respectively. This is Alpha-N-acetylneuraminide alpha-2,8-sialyltransferase from Pan troglodytes (Chimpanzee).